The chain runs to 361 residues: MSLIVMATGGTGGHIYPAVAVSRELLARGHEAVLLGQRGGMEERVAAEQGLPFQGVNAGKLARSGQGRPDPRELLRAARGVAEARAFLRDARPGAVVGFGGFASLPGVLAAQTLGIPTVLHEQNARLGLTQRLAAGRARAVGTAYPHVLGLPEGKATLVGMPVREERLPRAEALAQLGLQDGPLTLLVMGGSQGSLALNHAVPDILREIFGPEGRAPEGPVQVLHATGPRWLAEVAPRVADLPWYKPVGYTNAVAAWSAADLAITRAGTGTLAEAAFHGVPLVMVPLPESAENHQYHNAVSVQEAGAGRVVEQEQLRGALGAAVLECAAAGTRAAMRKAAFLRSPVGAASRFADLVERHLR.

UDP-N-acetyl-alpha-D-glucosamine is bound by residues 11–13 (TGG), asparagine 124, arginine 164, serine 192, and glutamine 295.

This sequence belongs to the glycosyltransferase 28 family. MurG subfamily.

The protein resides in the cell membrane. The enzyme catalyses di-trans,octa-cis-undecaprenyl diphospho-N-acetyl-alpha-D-muramoyl-L-alanyl-D-glutamyl-meso-2,6-diaminopimeloyl-D-alanyl-D-alanine + UDP-N-acetyl-alpha-D-glucosamine = di-trans,octa-cis-undecaprenyl diphospho-[N-acetyl-alpha-D-glucosaminyl-(1-&gt;4)]-N-acetyl-alpha-D-muramoyl-L-alanyl-D-glutamyl-meso-2,6-diaminopimeloyl-D-alanyl-D-alanine + UDP + H(+). It functions in the pathway cell wall biogenesis; peptidoglycan biosynthesis. Its function is as follows. Cell wall formation. Catalyzes the transfer of a GlcNAc subunit on undecaprenyl-pyrophosphoryl-MurNAc-pentapeptide (lipid intermediate I) to form undecaprenyl-pyrophosphoryl-MurNAc-(pentapeptide)GlcNAc (lipid intermediate II). This Deinococcus geothermalis (strain DSM 11300 / CIP 105573 / AG-3a) protein is UDP-N-acetylglucosamine--N-acetylmuramyl-(pentapeptide) pyrophosphoryl-undecaprenol N-acetylglucosamine transferase.